Here is a 535-residue protein sequence, read N- to C-terminus: SIR4-interacting protein SIF2 (535 aa).

The LisH domain occupies 4–36 (TSEELNYLIWRYCQEMGHEVSALALQDETRVLE). The segment at 104–140 (EGRFTLETNSESNKAGEDGASTVERETQEDDTNSIDS) is disordered. A compositionally biased stretch (acidic residues) spans 130–140 (TQEDDTNSIDS). Serine 137 is subject to Phosphoserine. WD repeat units lie at residues 155–186 (VKLDNIVSSTWNPLDESILAYGEKNSVARLAR), 218–248 (KTTNQVTCLAWSHDGNSIVTGVENGELRLWN), 259–289 (FHRAPIVSVKWNKDGTHIISMDVENVTILWN), 316–345 (GDGSLGVDVEWVDDDKFVIPGPKGAIFVYQ), 357–387 (GHHGPISVLEFNDTNKLLLSASDDGTLRIWH), 399–428 (GHSQSIVSASWVGDDKVISCSMDGSVRLWS), 440–470 (VDGVPIFAGRISQDGQKYAVAFMDGQVNVYD), and 503–534 (SQDNDYIFDLSWNCAGNKISVAYSLQEGSVVA).

In terms of assembly, homotetramer. Interacts with SIR4 N-terminal domain. Interacts with a complex composed of SIN3 and RPD3. Identified in the Set3C complex with HOS2, HST1, SNT1, CPR1, HOS4/YIL112W and SET3.

It localises to the nucleus. Antagonizes telomeric silencing in yeast. May recruit SIR4 to non-telomeric sites or repression. The chain is SIR4-interacting protein SIF2 (SIF2) from Saccharomyces cerevisiae (strain ATCC 204508 / S288c) (Baker's yeast).